The following is a 143-amino-acid chain: Nucleoside diphosphate kinase (143 aa).

Lys-11, Phe-59, Arg-87, Thr-93, Arg-104, and Asn-114 together coordinate ATP. His-117 serves as the catalytic Pros-phosphohistidine intermediate.

It belongs to the NDK family. As to quaternary structure, homotetramer. It depends on Mg(2+) as a cofactor.

Its subcellular location is the cytoplasm. It catalyses the reaction a 2'-deoxyribonucleoside 5'-diphosphate + ATP = a 2'-deoxyribonucleoside 5'-triphosphate + ADP. The enzyme catalyses a ribonucleoside 5'-diphosphate + ATP = a ribonucleoside 5'-triphosphate + ADP. In terms of biological role, major role in the synthesis of nucleoside triphosphates other than ATP. The ATP gamma phosphate is transferred to the NDP beta phosphate via a ping-pong mechanism, using a phosphorylated active-site intermediate. This is Nucleoside diphosphate kinase from Psychrobacter cryohalolentis (strain ATCC BAA-1226 / DSM 17306 / VKM B-2378 / K5).